The primary structure comprises 628 residues: Carbon monoxide dehydrogenase 1 (628 aa).

Residues Cys44, Cys52, Cys53, Cys56, Cys61, and Cys75 each coordinate [4Fe-4S] cluster. His266, Cys302, Cys340, Cys448, Cys478, and Cys519 together coordinate [Ni-4Fe-5S] cluster.

The protein belongs to the Ni-containing carbon monoxide dehydrogenase family. As to quaternary structure, homodimer. The cofactor is [4Fe-4S] cluster. It depends on [Ni-4Fe-5S] cluster as a cofactor.

It catalyses the reaction CO + 2 oxidized [2Fe-2S]-[ferredoxin] + H2O = 2 reduced [2Fe-2S]-[ferredoxin] + CO2 + 2 H(+). Functionally, CODH oxidizes carbon monoxide coupled, via CooF, to the reduction of a hydrogen cation by a hydrogenase (possibly CooH). This chain is Carbon monoxide dehydrogenase 1 (cooS1), found in Methanosarcina mazei (strain ATCC BAA-159 / DSM 3647 / Goe1 / Go1 / JCM 11833 / OCM 88) (Methanosarcina frisia).